The primary structure comprises 390 residues: Pyruvate dehydrogenase E1 component subunit alpha, somatic form, mitochondrial (390 aa).

The transit peptide at 1–29 (MRKMLAAVSRVLSGASQKPASRVLVASRN) directs the protein to the mitochondrion. At Lys-63 the chain carries N6-acetyllysine; alternate. At Lys-63 the chain carries N6-succinyllysine; alternate. Pyruvate contacts are provided by His-92, Tyr-118, Arg-119, Ala-157, Gly-165, Val-167, Asp-196, Gly-197, Ala-198, Asn-225, and Tyr-227. Thiamine diphosphate-binding residues include Tyr-118 and Arg-119. Thiamine diphosphate contacts are provided by Gly-165, Val-167, Asp-196, Gly-197, Ala-198, and Asn-225. Asp-196 contributes to the Mg(2+) binding site. 2 residues coordinate Mg(2+): Asn-225 and Tyr-227. Ser-232 is modified (phosphoserine; by PDK1). The residue at position 244 (Lys-244) is an N6-acetyllysine; alternate. Residue Lys-244 is modified to N6-succinyllysine; alternate. Lys-277 bears the N6-succinyllysine mark. His-292 provides a ligand contact to thiamine diphosphate. Phosphoserine; by PDK1, PDK2, PDK3 and PDK4 is present on Ser-293. Ser-295 is subject to Phosphoserine. Residue Ser-300 is modified to Phosphoserine; by PDK1, PDK2, PDK3 and PDK4. Tyr-301 is modified (phosphotyrosine). At Lys-313 the chain carries N6-acetyllysine; alternate. At Lys-313 the chain carries N6-succinyllysine; alternate. N6-acetyllysine occurs at positions 321 and 336. Position 385 is an N6-succinyllysine (Lys-385).

Heterotetramer of two PDHA1 and two PDHB subunits. The heterotetramer interacts with DLAT, and is part of the multimeric pyruvate dehydrogenase complex that contains multiple copies of pyruvate dehydrogenase (E1), dihydrolipoamide acetyltransferase (DLAT, E2) and lipoamide dehydrogenase (DLD, E3). These subunits are bound to an inner core composed of about 48 DLAT and 12 PDHX molecules. Thiamine diphosphate is required as a cofactor. It depends on Mg(2+) as a cofactor. Phosphorylation at Ser-232, Ser-293 and Ser-300 by PDK family kinases inactivates the enzyme; for this phosphorylation at a single site is sufficient. Dephosphorylation at all three sites, i.e. at Ser-232, Ser-293 and Ser-300, is required for reactivation. In terms of processing, acetylation alters the phosphorylation pattern. Deacetylated by SIRT3. As to expression, ubiquitous.

The protein localises to the mitochondrion matrix. The enzyme catalyses N(6)-[(R)-lipoyl]-L-lysyl-[protein] + pyruvate + H(+) = N(6)-[(R)-S(8)-acetyldihydrolipoyl]-L-lysyl-[protein] + CO2. Its activity is regulated as follows. Pyruvate dehydrogenase activity is inhibited by phosphorylation of PDHA1; it is reactivated by dephosphorylation. The pyruvate dehydrogenase complex catalyzes the overall conversion of pyruvate to acetyl-CoA and CO(2), and thereby links the glycolytic pathway to the tricarboxylic cycle. In Homo sapiens (Human), this protein is Pyruvate dehydrogenase E1 component subunit alpha, somatic form, mitochondrial (PDHA1).